The following is a 126-amino-acid chain: 5-hydroxyisourate hydrolase (126 aa).

Positions 16, 54, and 123 each coordinate substrate.

Belongs to the transthyretin family. 5-hydroxyisourate hydrolase subfamily. As to quaternary structure, homotetramer.

The catalysed reaction is 5-hydroxyisourate + H2O = 5-hydroxy-2-oxo-4-ureido-2,5-dihydro-1H-imidazole-5-carboxylate + H(+). Functionally, catalyzes the hydrolysis of 5-hydroxyisourate (HIU) to 2-oxo-4-hydroxy-4-carboxy-5-ureidoimidazoline (OHCU). The sequence is that of 5-hydroxyisourate hydrolase from Pseudomonas aeruginosa (strain ATCC 15692 / DSM 22644 / CIP 104116 / JCM 14847 / LMG 12228 / 1C / PRS 101 / PAO1).